A 232-amino-acid chain; its full sequence is Phosphoribosylformylglycinamidine synthase subunit PurQ (232 aa).

Positions 3–232 (FAVIVFPGSN…SLVASALAVV (230 aa)) constitute a Glutamine amidotransferase type-1 domain. Catalysis depends on Cys86, which acts as the Nucleophile. Residues His203 and Glu205 contribute to the active site.

Part of the FGAM synthase complex composed of 1 PurL, 1 PurQ and 2 PurS subunits.

It localises to the cytoplasm. The enzyme catalyses N(2)-formyl-N(1)-(5-phospho-beta-D-ribosyl)glycinamide + L-glutamine + ATP + H2O = 2-formamido-N(1)-(5-O-phospho-beta-D-ribosyl)acetamidine + L-glutamate + ADP + phosphate + H(+). It carries out the reaction L-glutamine + H2O = L-glutamate + NH4(+). The protein operates within purine metabolism; IMP biosynthesis via de novo pathway; 5-amino-1-(5-phospho-D-ribosyl)imidazole from N(2)-formyl-N(1)-(5-phospho-D-ribosyl)glycinamide: step 1/2. In terms of biological role, part of the phosphoribosylformylglycinamidine synthase complex involved in the purines biosynthetic pathway. Catalyzes the ATP-dependent conversion of formylglycinamide ribonucleotide (FGAR) and glutamine to yield formylglycinamidine ribonucleotide (FGAM) and glutamate. The FGAM synthase complex is composed of three subunits. PurQ produces an ammonia molecule by converting glutamine to glutamate. PurL transfers the ammonia molecule to FGAR to form FGAM in an ATP-dependent manner. PurS interacts with PurQ and PurL and is thought to assist in the transfer of the ammonia molecule from PurQ to PurL. This Gloeobacter violaceus (strain ATCC 29082 / PCC 7421) protein is Phosphoribosylformylglycinamidine synthase subunit PurQ.